The chain runs to 279 residues: Tryptophan synthase alpha chain (279 aa).

Active-site proton acceptor residues include glutamate 50 and aspartate 61.

This sequence belongs to the TrpA family. As to quaternary structure, tetramer of two alpha and two beta chains.

It carries out the reaction (1S,2R)-1-C-(indol-3-yl)glycerol 3-phosphate + L-serine = D-glyceraldehyde 3-phosphate + L-tryptophan + H2O. The protein operates within amino-acid biosynthesis; L-tryptophan biosynthesis; L-tryptophan from chorismate: step 5/5. In terms of biological role, the alpha subunit is responsible for the aldol cleavage of indoleglycerol phosphate to indole and glyceraldehyde 3-phosphate. The polypeptide is Tryptophan synthase alpha chain (Allorhizobium ampelinum (strain ATCC BAA-846 / DSM 112012 / S4) (Agrobacterium vitis (strain S4))).